We begin with the raw amino-acid sequence, 91 residues long: PqqA binding protein (91 aa).

The protein belongs to the PqqD family. As to quaternary structure, monomer. Interacts with PqqE.

It functions in the pathway cofactor biosynthesis; pyrroloquinoline quinone biosynthesis. In terms of biological role, functions as a PqqA binding protein and presents PqqA to PqqE, in the pyrroloquinoline quinone (PQQ) biosynthetic pathway. The protein is PqqA binding protein of Pseudomonas fluorescens (strain Pf0-1).